We begin with the raw amino-acid sequence, 143 residues long: 3-dehydroquinate dehydratase (143 aa).

Tyrosine 23 serves as the catalytic Proton acceptor. Residues asparagine 74, histidine 80, and aspartate 87 each contribute to the substrate site. The active-site Proton donor is the histidine 100. Residues isoleucine 101–serine 102 and arginine 111 each bind substrate.

Belongs to the type-II 3-dehydroquinase family. In terms of assembly, homododecamer.

It catalyses the reaction 3-dehydroquinate = 3-dehydroshikimate + H2O. It participates in metabolic intermediate biosynthesis; chorismate biosynthesis; chorismate from D-erythrose 4-phosphate and phosphoenolpyruvate: step 3/7. Its function is as follows. Catalyzes a trans-dehydration via an enolate intermediate. In Endomicrobium trichonymphae, this protein is 3-dehydroquinate dehydratase.